Here is a 274-residue protein sequence, read N- to C-terminus: NADPH-dependent 7-cyano-7-deazaguanine reductase (274 aa).

80–82 (VES) provides a ligand contact to substrate. 82 to 83 (SK) contacts NADPH. Cys181 functions as the Thioimide intermediate in the catalytic mechanism. Asp188 acts as the Proton donor in catalysis. 220–221 (HE) contributes to the substrate binding site. NADPH is bound at residue 249-250 (RG).

Belongs to the GTP cyclohydrolase I family. QueF type 2 subfamily. In terms of assembly, homodimer.

The protein localises to the cytoplasm. It catalyses the reaction 7-aminomethyl-7-carbaguanine + 2 NADP(+) = 7-cyano-7-deazaguanine + 2 NADPH + 3 H(+). It participates in tRNA modification; tRNA-queuosine biosynthesis. In terms of biological role, catalyzes the NADPH-dependent reduction of 7-cyano-7-deazaguanine (preQ0) to 7-aminomethyl-7-deazaguanine (preQ1). This chain is NADPH-dependent 7-cyano-7-deazaguanine reductase, found in Burkholderia multivorans (strain ATCC 17616 / 249).